Consider the following 126-residue polypeptide: Aspartate 1-decarboxylase (126 aa).

Catalysis depends on Ser25, which acts as the Schiff-base intermediate with substrate; via pyruvic acid. A Pyruvic acid (Ser) modification is found at Ser25. Residue Thr57 participates in substrate binding. Tyr58 (proton donor) is an active-site residue. 73-75 (GAA) contributes to the substrate binding site.

This sequence belongs to the PanD family. As to quaternary structure, heterooctamer of four alpha and four beta subunits. Pyruvate is required as a cofactor. Post-translationally, is synthesized initially as an inactive proenzyme, which is activated by self-cleavage at a specific serine bond to produce a beta-subunit with a hydroxyl group at its C-terminus and an alpha-subunit with a pyruvoyl group at its N-terminus.

It is found in the cytoplasm. It carries out the reaction L-aspartate + H(+) = beta-alanine + CO2. It functions in the pathway cofactor biosynthesis; (R)-pantothenate biosynthesis; beta-alanine from L-aspartate: step 1/1. Catalyzes the pyruvoyl-dependent decarboxylation of aspartate to produce beta-alanine. This chain is Aspartate 1-decarboxylase, found in Sodalis glossinidius (strain morsitans).